Consider the following 382-residue polypeptide: Protein farnesyltransferase subunit beta (382 aa).

PFTB repeat units follow at residues 78 to 119 (CERA…CLCD), 129 to 170 (RDRL…SLVG), 178 to 219 (FEGT…ALLG), 226 to 268 (EIKL…VIVA), and 286 to 328 (PEKL…SSIA). Residues 204–207 (HGGY) and 247–250 (RSNK) contribute to the (2E,6E)-farnesyl diphosphate site. Asp253 and Cys255 together coordinate Zn(2+). Position 256–259 (256–259 (YSWW)) interacts with (2E,6E)-farnesyl diphosphate. His316 is a binding site for Zn(2+).

It belongs to the protein prenyltransferase subunit beta family. Heterodimer of an alpha(cwp1) and a beta(cpp1) subunit. Zn(2+) is required as a cofactor.

The catalysed reaction is L-cysteinyl-[protein] + (2E,6E)-farnesyl diphosphate = S-(2E,6E)-farnesyl-L-cysteinyl-[protein] + diphosphate. Functionally, catalyzes the transfer of a farnesyl moiety from farnesyl diphosphate to a cysteine at the fourth position from the C-terminus of several proteins. The beta(cpp1) subunit is responsible for peptide-binding. The polypeptide is Protein farnesyltransferase subunit beta (cpp1) (Schizosaccharomyces pombe (strain 972 / ATCC 24843) (Fission yeast)).